A 4423-amino-acid chain; its full sequence is Nonribosomal peptide synthetase 7 (4423 aa).

Residues 572-986 form a condensation 1 region; that stretch reads NIYPCTSIQE…LISQDDKNRI (415 aa). The interval 1007–1404 is adenylation 1; that stretch reads ERIQKQPSAV…GRRDTQVKIR (398 aa). One can recognise a Carrier 1 domain in the interval 1533–1609; the sequence is LPLTETEQKL…DLARTIDERN (77 aa). Ser-1570 bears the O-(pantetheine 4'-phosphoryl)serine mark. The segment at 1657–2066 is condensation 2; the sequence is EDVYPCTSLQ…QFLDETHHET (410 aa). The segment at 2102–2499 is adenylation 2; it reads RDVAKEQPDS…YIGRMGSEVK (398 aa). Residues 2642–2718 enclose the Carrier 2 domain; it reads VPQTRIGKKL…DCARILEADQ (77 aa). O-(pantetheine 4'-phosphoryl)serine is present on Ser-2679. Positions 2764–3170 are condensation 3; it reads EDVYPCTPMQ…AASASSDDQT (407 aa). Residues 3205 to 3609 form an adenylation 3 region; that stretch reads RSLETRPDSQ…GRGDSQIKIR (405 aa). The region spanning 3731–3804 is the Carrier 3 domain; that stretch reads TESEYITRTL…KMAVVAQHQT (74 aa). Ser-3765 carries the O-(pantetheine 4'-phosphoryl)serine modification. The tract at residues 3875–4278 is condensation 4; the sequence is TFVLDAEGDL…SQDEKLALLG (404 aa). Residues 4288–4300 show a composition bias toward polar residues; the sequence is KLTKLQRVNSPKE. The tract at residues 4288-4312 is disordered; it reads KLTKLQRVNSPKEQTLRKDKPTNGV.

The protein belongs to the NRP synthetase family.

Its pathway is secondary metabolite biosynthesis. In terms of biological role, nonribosomal peptide synthetase; part of the gene cluster that mediates the biosynthesis of the lipopeptide fusaristatin A. Fusaristatin A consists of a polyketide chain linked to three amino acid residues glutamine (Gln), dehydroalanine (dehydro-Ala), and beta-aminoisobutyric acid. The biosynthesis starts with formation of a linear polyketide chain by the highly reducing polyketide synthase PKS6. The gene cluster does not contain an acyl-CoA ligase or an acyl-transferase, and it is therefore predicted that the polyketide is transferred directly to the nonribosomal peptide synthetase NRPS7. Modules 1-3 from NRPS7 incorporate dehydro-Ala, Gln, and beta-aminoisobutyric acid in the compound, which is released by cyclization. The beta-aminoisobutyric acid units are most likely not freely available to the NRPS, but can be synthesized from thymine, which requires a dehydrogenase, a monooxygenase, and an aminotransferase. The fusaristatin A cluster contains a cytochrome P450 monooxygenase (FGSG_08207) and an aminotransferase (FGSG_17085), which theoretically can perform two of the enzymatic steps. The enzymes may however also be involved in biosynthesis of dehydroalanine or modification of the polyketide. The dehydro-Ala residue can be a result of cyclization, where serine is dehydrated. The last gene of the cluster encodes a protein with an A/B barrel domain found in variable enzymes, which hampers functional prediction. The protein is Nonribosomal peptide synthetase 7 of Gibberella zeae (strain ATCC MYA-4620 / CBS 123657 / FGSC 9075 / NRRL 31084 / PH-1) (Wheat head blight fungus).